We begin with the raw amino-acid sequence, 691 residues long: Elongation factor G (691 aa).

The tr-type G domain maps to 6-281 (SKYRNIGIMA…GVVDFLPSPI (276 aa)). Residues 15–22 (AHIDAGKT), 79–83 (DTPGH), and 133–136 (NKMD) contribute to the GTP site.

The protein belongs to the TRAFAC class translation factor GTPase superfamily. Classic translation factor GTPase family. EF-G/EF-2 subfamily.

It localises to the cytoplasm. In terms of biological role, catalyzes the GTP-dependent ribosomal translocation step during translation elongation. During this step, the ribosome changes from the pre-translocational (PRE) to the post-translocational (POST) state as the newly formed A-site-bound peptidyl-tRNA and P-site-bound deacylated tRNA move to the P and E sites, respectively. Catalyzes the coordinated movement of the two tRNA molecules, the mRNA and conformational changes in the ribosome. The chain is Elongation factor G from Wolbachia pipientis wMel.